We begin with the raw amino-acid sequence, 79 residues long: Small ribosomal subunit protein bS18 (79 aa).

The protein belongs to the bacterial ribosomal protein bS18 family. Part of the 30S ribosomal subunit. Forms a tight heterodimer with protein bS6.

Functionally, binds as a heterodimer with protein bS6 to the central domain of the 16S rRNA, where it helps stabilize the platform of the 30S subunit. In Micrococcus luteus (strain ATCC 4698 / DSM 20030 / JCM 1464 / CCM 169 / CCUG 5858 / IAM 1056 / NBRC 3333 / NCIMB 9278 / NCTC 2665 / VKM Ac-2230) (Micrococcus lysodeikticus), this protein is Small ribosomal subunit protein bS18.